The chain runs to 451 residues: UPF0210 protein CA_C0479 (451 aa).

Belongs to the UPF0210 family. In terms of assembly, homodimer.

This Clostridium acetobutylicum (strain ATCC 824 / DSM 792 / JCM 1419 / IAM 19013 / LMG 5710 / NBRC 13948 / NRRL B-527 / VKM B-1787 / 2291 / W) protein is UPF0210 protein CA_C0479.